A 367-amino-acid chain; its full sequence is D-alanine--D-alanine ligase (367 aa).

In terms of domain architecture, ATP-grasp spans 145–351; sequence KRLLRDAGLP…QPALMDELVA (207 aa). Residue 174-229 participates in ATP binding; that stretch reads RAVGSSELFVKPANLGSSVGISKTRDAAEFEAACQLALRFDRKILIERCIAPVREI. Residues D306, E318, and N320 each coordinate Mg(2+).

This sequence belongs to the D-alanine--D-alanine ligase family. It depends on Mg(2+) as a cofactor. The cofactor is Mn(2+).

It localises to the cytoplasm. It carries out the reaction 2 D-alanine + ATP = D-alanyl-D-alanine + ADP + phosphate + H(+). Its pathway is cell wall biogenesis; peptidoglycan biosynthesis. Functionally, cell wall formation. In Bradyrhizobium sp. (strain ORS 278), this protein is D-alanine--D-alanine ligase.